A 315-amino-acid polypeptide reads, in one-letter code: Ribosomal protein L11 methyltransferase (315 aa).

Thr-164, Gly-185, Asp-207, and Asn-249 together coordinate S-adenosyl-L-methionine.

The protein belongs to the methyltransferase superfamily. PrmA family.

Its subcellular location is the cytoplasm. The catalysed reaction is L-lysyl-[protein] + 3 S-adenosyl-L-methionine = N(6),N(6),N(6)-trimethyl-L-lysyl-[protein] + 3 S-adenosyl-L-homocysteine + 3 H(+). Methylates ribosomal protein L11. The polypeptide is Ribosomal protein L11 methyltransferase (Lactobacillus gasseri (strain ATCC 33323 / DSM 20243 / BCRC 14619 / CIP 102991 / JCM 1131 / KCTC 3163 / NCIMB 11718 / NCTC 13722 / AM63)).